The following is a 418-amino-acid chain: UDP-N-acetylglucosamine 1-carboxyvinyltransferase (418 aa).

Position 22-23 (22-23 (KN)) interacts with phosphoenolpyruvate. Residue R92 coordinates UDP-N-acetyl-alpha-D-glucosamine. Residue C116 is the Proton donor of the active site. C116 carries the 2-(S-cysteinyl)pyruvic acid O-phosphothioketal modification. UDP-N-acetyl-alpha-D-glucosamine contacts are provided by residues 121–125 (RPVDL), D305, and I327.

The protein belongs to the EPSP synthase family. MurA subfamily.

The protein resides in the cytoplasm. It carries out the reaction phosphoenolpyruvate + UDP-N-acetyl-alpha-D-glucosamine = UDP-N-acetyl-3-O-(1-carboxyvinyl)-alpha-D-glucosamine + phosphate. It participates in cell wall biogenesis; peptidoglycan biosynthesis. Cell wall formation. Adds enolpyruvyl to UDP-N-acetylglucosamine. The polypeptide is UDP-N-acetylglucosamine 1-carboxyvinyltransferase (Acidiphilium cryptum (strain JF-5)).